A 672-amino-acid polypeptide reads, in one-letter code: tRNA(Met) cytidine acetyltransferase TmcA (672 aa).

Residues glutamine 180, 202 to 211 (GRGKSALAGQ), and arginine 319 contribute to the ATP site. One can recognise an N-acetyltransferase domain in the interval 349–531 (IEISAFYQQA…SGCYTAMALL (183 aa)). Residues 461–463 (IAV), 468–474 (QREGIGQ), and arginine 506 contribute to the acetyl-CoA site.

Belongs to the RNA cytidine acetyltransferase family. TmcA subfamily.

The protein localises to the cytoplasm. The catalysed reaction is cytidine(34) in elongator tRNA(Met) + acetyl-CoA + ATP + H2O = N(4)-acetylcytidine(34) in elongator tRNA(Met) + ADP + phosphate + CoA + H(+). Functionally, catalyzes the formation of N(4)-acetylcytidine (ac(4)C) at the wobble position of tRNA(Met), by using acetyl-CoA as an acetyl donor and ATP (or GTP). The protein is tRNA(Met) cytidine acetyltransferase TmcA of Salmonella typhimurium (strain LT2 / SGSC1412 / ATCC 700720).